A 292-amino-acid chain; its full sequence is UTP--glucose-1-phosphate uridylyltransferase (292 aa).

This sequence belongs to the UDPGP type 2 family. Interacts with FloT.

The protein resides in the cell membrane. It localises to the membrane raft. It carries out the reaction alpha-D-glucose 1-phosphate + UTP + H(+) = UDP-alpha-D-glucose + diphosphate. It participates in glycolipid metabolism; diglucosyl-diacylglycerol biosynthesis. Catalyzes the formation of UDP-glucose from glucose-1-phosphate and UTP. This is an intermediate step in the biosynthesis of diglucosyl-diacylglycerol (Glc2-DAG), i.e. the predominant glycolipid found in B.subtilis membrane, which is also used as a membrane anchor for lipoteichoic acid (LTA). Has a role in the biosynthesis of all phosphate-containing envelope polymers, since UDP-glucose serves as a glucosyl donor not only for the biosynthesis of LTA but also for wall teichoic acids (WTAs). Is required for biofilm formation. This is likely due to another role of UDP-glucose, which might also act as a metabolic signal regulating biofilm formation or may be involved in some unknown biosynthetic pathway essential for biofilm formation, e.g. the synthesis of an exopolysaccharide. This is UTP--glucose-1-phosphate uridylyltransferase (gtaB) from Bacillus subtilis (strain 168).